The following is a 317-amino-acid chain: Putative cuticle collagen 80 (317 aa).

Positions 80–262 (CNCGPQASNC…GAPGNDGAPG (183 aa)) are disordered. Triple-helical region stretches follow at residues 92–124 (GPPG…AGPA), 137–199 (GAPG…SGQR), and 202–264 (GLPG…PGSD). 3 stretches are compositionally biased toward low complexity: residues 108-124 (QPGP…AGPA), 135-145 (PQGAPGPAGAP), and 175-206 (AGDA…LPGP). Pro residues-rich tracts occupy residues 207-219 (SGRP…PGAP) and 230-240 (PAGPPGPPGPN). Over residues 242–262 (QPGHPGQDGQPGAPGNDGAPG) the composition is skewed to low complexity.

The protein belongs to the cuticular collagen family. In terms of assembly, collagen polypeptide chains are complexed within the cuticle by disulfide bonds and other types of covalent cross-links.

Functionally, nematode cuticles are composed largely of collagen-like proteins. The cuticle functions both as an exoskeleton and as a barrier to protect the worm from its environment. This Caenorhabditis elegans protein is Putative cuticle collagen 80 (col-80).